Reading from the N-terminus, the 209-residue chain is Orotate phosphoribosyltransferase (209 aa).

5-phospho-alpha-D-ribose 1-diphosphate-binding positions include Arg96, Lys100, His102, and 122 to 130; that span reads EDLISTGGS. Ser126 is an orotate binding site.

This sequence belongs to the purine/pyrimidine phosphoribosyltransferase family. PyrE subfamily. Homodimer. Mg(2+) is required as a cofactor.

The enzyme catalyses orotidine 5'-phosphate + diphosphate = orotate + 5-phospho-alpha-D-ribose 1-diphosphate. It functions in the pathway pyrimidine metabolism; UMP biosynthesis via de novo pathway; UMP from orotate: step 1/2. Functionally, catalyzes the transfer of a ribosyl phosphate group from 5-phosphoribose 1-diphosphate to orotate, leading to the formation of orotidine monophosphate (OMP). The polypeptide is Orotate phosphoribosyltransferase (Streptococcus agalactiae serotype Ia (strain ATCC 27591 / A909 / CDC SS700)).